Here is a 518-residue protein sequence, read N- to C-terminus: MADKLNEYVALIKNEIKKYSKQIFNSEIGKVISVADGIAKVSGLENALLNELIEFENNVQGIALNLEQNTVGVALFGDYSKIREGSTAKRTHNVMQTPVGDVMLGRIVNALGEPVDGRGPIKAEEFDQVEKIAPGVMTRKTVNQPLETGILTIDALFPIGKGQRELIVGDRQTGKTSIAIDTIINQRGKDVYCVYVAMGQKNSSVAQIVHQLEVTDSMKYTTVVCATASDPASMIYLTPFTGITIAEYWLKQGKDVLIVFDDLSKHAIAYRTLSLLLRRPPGREAFPGDVFYLHSRLLERACRLNEEHGGGSITALPIIETQAGDISAYIPTNVISITDGQLFMVSNLFNSGQRPAIHVGLSVSRVGSAAQIKAIKQQTGSLKLELAQYSELDSFSQFGSDLDENTKQILERGKRVMEMIKQPNGKPYSQTHEALFLFAIAKSFIKFIPLDYIAKFKQRIMEEFDKEHPIYKEIATQKSFSEALEAQTNTAFKALVKRFVSALPDYDITKYGTMEELE.

Residue 169-176 (GDRQTGKT) participates in ATP binding.

This sequence belongs to the ATPase alpha/beta chains family. As to quaternary structure, F-type ATPases have 2 components, CF(1) - the catalytic core - and CF(0) - the membrane proton channel. CF(1) has five subunits: alpha(3), beta(3), gamma(1), delta(1), epsilon(1). CF(0) has three main subunits: a(1), b(2) and c(9-12). The alpha and beta chains form an alternating ring which encloses part of the gamma chain. CF(1) is attached to CF(0) by a central stalk formed by the gamma and epsilon chains, while a peripheral stalk is formed by the delta and b chains.

It is found in the cell membrane. The catalysed reaction is ATP + H2O + 4 H(+)(in) = ADP + phosphate + 5 H(+)(out). In terms of biological role, produces ATP from ADP in the presence of a proton gradient across the membrane. The alpha chain is a regulatory subunit. This is ATP synthase subunit alpha from Mycoplasma pneumoniae (strain ATCC 29342 / M129 / Subtype 1) (Mycoplasmoides pneumoniae).